The sequence spans 294 residues: Small ribosomal subunit protein uS2 (294 aa).

A disordered region spans residues 254–294; the sequence is ESSNTEAPVAETAAAEAPVADAAIEAPVAEEAKTTEADDTK. Over residues 259–282 the composition is skewed to low complexity; that stretch reads EAPVAETAAAEAPVADAAIEAPVA. The segment covering 283–294 has biased composition (basic and acidic residues); the sequence is EEAKTTEADDTK.

It belongs to the universal ribosomal protein uS2 family.

The protein is Small ribosomal subunit protein uS2 of Renibacterium salmoninarum (strain ATCC 33209 / DSM 20767 / JCM 11484 / NBRC 15589 / NCIMB 2235).